We begin with the raw amino-acid sequence, 121 residues long: Small ribosomal subunit protein uS13 (121 aa).

The interval 94–121 (GLPVRGQRTRTNARTRKGPRKGAAALKK) is disordered.

Belongs to the universal ribosomal protein uS13 family. In terms of assembly, part of the 30S ribosomal subunit. Forms a loose heterodimer with protein S19. Forms two bridges to the 50S subunit in the 70S ribosome.

In terms of biological role, located at the top of the head of the 30S subunit, it contacts several helices of the 16S rRNA. In the 70S ribosome it contacts the 23S rRNA (bridge B1a) and protein L5 of the 50S subunit (bridge B1b), connecting the 2 subunits; these bridges are implicated in subunit movement. Contacts the tRNAs in the A and P-sites. The chain is Small ribosomal subunit protein uS13 from Verminephrobacter eiseniae (strain EF01-2).